The sequence spans 267 residues: Outer membrane protein assembly factor BamD (267 aa).

The signal sequence occupies residues 1-16 (MKKILLTVSLGLALSA). C17 carries the N-palmitoyl cysteine lipid modification. A lipid anchor (S-diacylglycerol cysteine) is attached at C17.

This sequence belongs to the BamD family. In terms of assembly, part of the Bam complex.

The protein localises to the cell outer membrane. Part of the outer membrane protein assembly complex, which is involved in assembly and insertion of beta-barrel proteins into the outer membrane. Required for efficient transformation of Neisseria gonorrhoeae by species-related DNA. This Neisseria gonorrhoeae protein is Outer membrane protein assembly factor BamD.